Reading from the N-terminus, the 229-residue chain is Nectarin-1 (229 aa).

The N-terminal stretch at 1-32 (MAAFGIKSKIFQIMEMTILFLFAISIDRYCFA) is a signal peptide. C42 and C57 are oxidised to a cystine. N60 carries an N-linked (GlcNAc...) asparagine glycan. Residues 69–217 (FAISKPGATN…TFQINIEDVQ (149 aa)) form the Cupin type-1 domain. Positions 117, 119, 124, and 163 each coordinate Mn(2+).

The protein belongs to the germin family. In terms of assembly, monomer. In the absence of manganese, it forms tetrameric and pentameric forms which show superoxide dismutase activity. Mn(2+) serves as cofactor. In terms of processing, glycosylated.

Its subcellular location is the secreted. It is found in the extracellular space. It localises to the apoplast. The catalysed reaction is 2 superoxide + 2 H(+) = H2O2 + O2. Functionally, may interact with bacterial adhesins thereby protecting the reproductive tissues from microbial attack. Has no oxalate oxidase activity. In Nicotiana plumbaginifolia (Leadwort-leaved tobacco), this protein is Nectarin-1 (NEC1).